A 106-amino-acid chain; its full sequence is ATP-dependent Clp protease adapter protein ClpS (106 aa).

The protein belongs to the ClpS family. As to quaternary structure, binds to the N-terminal domain of the chaperone ClpA.

Involved in the modulation of the specificity of the ClpAP-mediated ATP-dependent protein degradation. The chain is ATP-dependent Clp protease adapter protein ClpS from Enterobacter sp. (strain 638).